The chain runs to 127 residues: MAKPTRKRRVKKNIESGIAHIHATFNNTIVMITDVHGNAIAWSSAGALGFKGSRKSTPFAAQMASEAAAKSAQEHGLKSVEVTVKGPGSGRESAIRALAAAGLEVTAIRDVTPVPHNGARPPKRRRV.

Belongs to the universal ribosomal protein uS11 family. Part of the 30S ribosomal subunit. Interacts with proteins S7 and S18. Binds to IF-3.

Its function is as follows. Located on the platform of the 30S subunit, it bridges several disparate RNA helices of the 16S rRNA. Forms part of the Shine-Dalgarno cleft in the 70S ribosome. The chain is Small ribosomal subunit protein uS11 from Streptococcus gordonii (strain Challis / ATCC 35105 / BCRC 15272 / CH1 / DL1 / V288).